The chain runs to 273 residues: Transposable element Tcb1 transposase (273 aa).

The protein belongs to the transposase 5 family.

It localises to the nucleus. Functionally, probably essential for transposable element Tcb1 transposition. The insertion of Tcb1 is the main cause of spontaneous mutations. The sequence is that of Transposable element Tcb1 transposase from Caenorhabditis briggsae.